Consider the following 231-residue polypeptide: Probable amino-acid ABC transporter permease protein y4tG (231 aa).

Transmembrane regions (helical) follow at residues threonine 9–isoleucine 29, leucine 32–leucine 52, alanine 64–tyrosine 84, valine 86–isoleucine 106, tyrosine 161–leucine 181, and valine 196–valine 216. The 190-residue stretch at leucine 28 to arginine 217 folds into the ABC transmembrane type-1 domain.

This sequence belongs to the binding-protein-dependent transport system permease family. HisMQ subfamily.

It is found in the cell inner membrane. In terms of biological role, probably part of the binding-protein-dependent transport system y4tEFGH for an amino acid. Probably responsible for the translocation of the substrate across the membrane. The chain is Probable amino-acid ABC transporter permease protein y4tG from Sinorhizobium fredii (strain NBRC 101917 / NGR234).